Here is a 466-residue protein sequence, read N- to C-terminus: Asparagine--tRNA ligase (466 aa).

This sequence belongs to the class-II aminoacyl-tRNA synthetase family. Homodimer.

Its subcellular location is the cytoplasm. It carries out the reaction tRNA(Asn) + L-asparagine + ATP = L-asparaginyl-tRNA(Asn) + AMP + diphosphate + H(+). This Wigglesworthia glossinidia brevipalpis protein is Asparagine--tRNA ligase.